Reading from the N-terminus, the 467-residue chain is Dimethylamine methyltransferase MtbB1 (467 aa).

Residue O356 is a non-standard amino acid, pyrrolysine.

This sequence belongs to the dimethylamine methyltransferase family.

It carries out the reaction Co(I)-[dimethylamine-specific corrinoid protein] + dimethylamine + H(+) = methyl-Co(III)-[dimethylamine-specific corrinoid protein] + methylamine. The protein operates within one-carbon metabolism; methanogenesis from dimethylamine. In terms of biological role, catalyzes the transfer of a methyl group from dimethylamine to the corrinoid cofactor of MtbC. The chain is Dimethylamine methyltransferase MtbB1 (mtbB1) from Methanosarcina barkeri (strain Fusaro / DSM 804).